A 251-amino-acid chain; its full sequence is Lactose phosphotransferase system repressor (251 aa).

The HTH deoR-type domain maps to 3–58 (KYDRLDEITKLVNKRGSVRTNEIVEDLNVSDMTVRRDLAELEEKGVLTKIHGGARS). A DNA-binding region (H-T-H motif) is located at residues 20 to 39 (VRTNEIVEDLNVSDMTVRRD).

Its function is as follows. Repressor of the lactose catabolism operon. Galactose-6-phosphate is the inducer. This Staphylococcus epidermidis (strain ATCC 35984 / DSM 28319 / BCRC 17069 / CCUG 31568 / BM 3577 / RP62A) protein is Lactose phosphotransferase system repressor (lacR).